We begin with the raw amino-acid sequence, 265 residues long: Thiazole synthase (265 aa).

Residue Lys-107 is the Schiff-base intermediate with DXP of the active site. Residues Gly-168, 194–195, and 216–217 each bind 1-deoxy-D-xylulose 5-phosphate; these read AG and NT.

The protein belongs to the ThiG family. Homotetramer. Forms heterodimers with either ThiH or ThiS.

The protein resides in the cytoplasm. The enzyme catalyses [ThiS sulfur-carrier protein]-C-terminal-Gly-aminoethanethioate + 2-iminoacetate + 1-deoxy-D-xylulose 5-phosphate = [ThiS sulfur-carrier protein]-C-terminal Gly-Gly + 2-[(2R,5Z)-2-carboxy-4-methylthiazol-5(2H)-ylidene]ethyl phosphate + 2 H2O + H(+). The protein operates within cofactor biosynthesis; thiamine diphosphate biosynthesis. Functionally, catalyzes the rearrangement of 1-deoxy-D-xylulose 5-phosphate (DXP) to produce the thiazole phosphate moiety of thiamine. Sulfur is provided by the thiocarboxylate moiety of the carrier protein ThiS. In vitro, sulfur can be provided by H(2)S. The chain is Thiazole synthase from Pseudomonas paraeruginosa (strain DSM 24068 / PA7) (Pseudomonas aeruginosa (strain PA7)).